The following is a 183-amino-acid chain: Apo-citrate lyase phosphoribosyl-dephospho-CoA transferase (183 aa).

This sequence belongs to the CitX family.

The enzyme catalyses apo-[citrate lyase ACP] + 2'-(5''-triphospho-alpha-D-ribosyl)-3'-dephospho-CoA = holo-[citrate lyase ACP] + diphosphate. In terms of biological role, transfers 2-(5''-triphosphoribosyl)-3'-dephosphocoenzyme-A on a serine residue to the apo-acyl carrier protein (gamma chain) of the citrate lyase to yield holo-acyl carrier protein. This is Apo-citrate lyase phosphoribosyl-dephospho-CoA transferase from Escherichia coli (strain SMS-3-5 / SECEC).